A 61-amino-acid chain; its full sequence is Small ribosomal subunit protein uS14B (61 aa).

The Zn(2+) site is built by cysteine 24, cysteine 27, cysteine 40, and cysteine 43.

The protein belongs to the universal ribosomal protein uS14 family. Zinc-binding uS14 subfamily. As to quaternary structure, part of the 30S ribosomal subunit. Contacts proteins S3 and S10. Zn(2+) serves as cofactor.

Its function is as follows. Binds 16S rRNA, required for the assembly of 30S particles and may also be responsible for determining the conformation of the 16S rRNA at the A site. This is Small ribosomal subunit protein uS14B from Mycobacteroides abscessus (strain ATCC 19977 / DSM 44196 / CCUG 20993 / CIP 104536 / JCM 13569 / NCTC 13031 / TMC 1543 / L948) (Mycobacterium abscessus).